The following is a 394-amino-acid chain: Elongation factor Tu (394 aa).

The tr-type G domain occupies 10-204; sequence KPHVNVGTIG…HLDSYIPEPE (195 aa). Residues 19–26 form a G1 region; it reads GHVDHGKT. 19-26 contacts GTP; sequence GHVDHGKT. A Mg(2+)-binding site is contributed by Thr-26. Positions 60–64 are G2; it reads GITIN. The G3 stretch occupies residues 81–84; it reads DCPG. Residues 81 to 85 and 136 to 139 each bind GTP; these read DCPGH and NKCD. Residues 136–139 are G4; the sequence is NKCD. The interval 174-176 is G5; the sequence is SAL.

It belongs to the TRAFAC class translation factor GTPase superfamily. Classic translation factor GTPase family. EF-Tu/EF-1A subfamily. As to quaternary structure, monomer.

The protein localises to the cytoplasm. The catalysed reaction is GTP + H2O = GDP + phosphate + H(+). GTP hydrolase that promotes the GTP-dependent binding of aminoacyl-tRNA to the A-site of ribosomes during protein biosynthesis. The polypeptide is Elongation factor Tu (Haemophilus ducreyi (strain 35000HP / ATCC 700724)).